A 229-amino-acid chain; its full sequence is Uracil-DNA glycosylase (229 aa).

The Proton acceptor role is filled by Asp64.

Belongs to the uracil-DNA glycosylase (UDG) superfamily. UNG family.

Its subcellular location is the cytoplasm. The enzyme catalyses Hydrolyzes single-stranded DNA or mismatched double-stranded DNA and polynucleotides, releasing free uracil.. In terms of biological role, excises uracil residues from the DNA which can arise as a result of misincorporation of dUMP residues by DNA polymerase or due to deamination of cytosine. This Geobacillus kaustophilus (strain HTA426) protein is Uracil-DNA glycosylase.